The sequence spans 425 residues: 3-isopropylmalate dehydratase large subunit (425 aa).

[4Fe-4S] cluster is bound by residues Cys-306, Cys-366, and Cys-369.

Belongs to the aconitase/IPM isomerase family. LeuC type 2 subfamily. Heterodimer of LeuC and LeuD. [4Fe-4S] cluster serves as cofactor.

The enzyme catalyses (2R,3S)-3-isopropylmalate = (2S)-2-isopropylmalate. It participates in amino-acid biosynthesis; L-leucine biosynthesis; L-leucine from 3-methyl-2-oxobutanoate: step 2/4. Catalyzes the isomerization between 2-isopropylmalate and 3-isopropylmalate, via the formation of 2-isopropylmaleate. The sequence is that of 3-isopropylmalate dehydratase large subunit from Nautilia profundicola (strain ATCC BAA-1463 / DSM 18972 / AmH).